A 116-amino-acid chain; its full sequence is Large ribosomal subunit protein uL18 (116 aa).

Belongs to the universal ribosomal protein uL18 family. Part of the 50S ribosomal subunit; part of the 5S rRNA/L5/L18/L25 subcomplex. Contacts the 5S and 23S rRNAs.

In terms of biological role, this is one of the proteins that bind and probably mediate the attachment of the 5S RNA into the large ribosomal subunit, where it forms part of the central protuberance. This is Large ribosomal subunit protein uL18 from Acinetobacter baylyi (strain ATCC 33305 / BD413 / ADP1).